Consider the following 61-residue polypeptide: MAVPKRKKSKSRRNMHRSHCRLRVPNIGIDKTTGEYKLSHHICLGGYYNEKQVLEVDTSGV.

Belongs to the bacterial ribosomal protein bL32 family.

The protein is Large ribosomal subunit protein bL32 of Ehrlichia canis (strain Jake).